The sequence spans 151 residues: Probable cyclic pyranopterin monophosphate synthase (151 aa).

Substrate is bound by residues 66–68 (MCH) and 102–103 (ME). The active site involves Asp117.

The protein belongs to the MoaC family. Homohexamer; trimer of dimers.

It carries out the reaction (8S)-3',8-cyclo-7,8-dihydroguanosine 5'-triphosphate = cyclic pyranopterin phosphate + diphosphate. The protein operates within cofactor biosynthesis; molybdopterin biosynthesis. In terms of biological role, catalyzes the conversion of (8S)-3',8-cyclo-7,8-dihydroguanosine 5'-triphosphate to cyclic pyranopterin monophosphate (cPMP). This Sulfurisphaera tokodaii (strain DSM 16993 / JCM 10545 / NBRC 100140 / 7) (Sulfolobus tokodaii) protein is Probable cyclic pyranopterin monophosphate synthase.